A 142-amino-acid polypeptide reads, in one-letter code: Fusaric acid resistance protein FusB (142 aa).

The interval 73–142 is disordered; sequence AAPCSRKAST…ASCSPAIRPR (70 aa). The span at 81 to 142 shows a compositional bias: low complexity; the sequence is STGSPARSSG…ASCSPAIRPR (62 aa).

In terms of biological role, involved in the resistance (detoxification) of the fungal toxin fusaric acid. This is Fusaric acid resistance protein FusB (fusB) from Burkholderia cepacia (Pseudomonas cepacia).